We begin with the raw amino-acid sequence, 187 residues long: ATP synthase subunit b (187 aa).

The helical transmembrane segment at 4–24 (LALFALLMVPAILLASGHDSG) threads the bilayer.

Belongs to the ATPase B chain family. As to quaternary structure, F-type ATPases have 2 components, F(1) - the catalytic core - and F(0) - the membrane proton channel. F(1) has five subunits: alpha(3), beta(3), gamma(1), delta(1), epsilon(1). F(0) has three main subunits: a(1), b(2) and c(10-14). The alpha and beta chains form an alternating ring which encloses part of the gamma chain. F(1) is attached to F(0) by a central stalk formed by the gamma and epsilon chains, while a peripheral stalk is formed by the delta and b chains.

Its subcellular location is the cell inner membrane. In terms of biological role, f(1)F(0) ATP synthase produces ATP from ADP in the presence of a proton or sodium gradient. F-type ATPases consist of two structural domains, F(1) containing the extramembraneous catalytic core and F(0) containing the membrane proton channel, linked together by a central stalk and a peripheral stalk. During catalysis, ATP synthesis in the catalytic domain of F(1) is coupled via a rotary mechanism of the central stalk subunits to proton translocation. Its function is as follows. Component of the F(0) channel, it forms part of the peripheral stalk, linking F(1) to F(0). This Sulfurovum sp. (strain NBC37-1) protein is ATP synthase subunit b.